We begin with the raw amino-acid sequence, 235 residues long: Sugar fermentation stimulation protein homolog (235 aa).

Belongs to the SfsA family.

This is Sugar fermentation stimulation protein homolog from Bartonella henselae (strain ATCC 49882 / DSM 28221 / CCUG 30454 / Houston 1) (Rochalimaea henselae).